A 377-amino-acid chain; its full sequence is Ferric enterobactin transport protein FepE (377 aa).

At 1–41 (MSSLNIKQGSDAHFPDYPLASPSNNEIDLLNLISVLWRAKK) the chain is on the cytoplasmic side. The helical transmembrane segment at 42-62 (TVMAVVFAFACAGLLISFILP) threads the bilayer. Over 63 to 338 (QKWTSAAVVT…LPVKKDGPGK (276 aa)) the chain is Periplasmic. The helical transmembrane segment at 339-359 (AIIVILSALIGGMVACGGVLL) threads the bilayer. At 360–377 (RYAMASRKQDAMMADHLV) the chain is on the cytoplasmic side.

The protein belongs to the WzzB/Cld/Rol family.

The protein localises to the cell inner membrane. Functionally, part of the ferric enterobactin transport system. The polypeptide is Ferric enterobactin transport protein FepE (fepE) (Escherichia coli (strain K12)).